Consider the following 299-residue polypeptide: Probable plastid-lipid-associated protein 13, chloroplastic (299 aa).

A chloroplast-targeting transit peptide spans 1-48 (MALIHGSVPGTSAVRLVFSTSASPSRFCLNVPVVKQGWKNSCRRRVLR). An N-acetylvaline modification is found at Ala2.

The protein belongs to the PAP/fibrillin family.

It localises to the plastid. The protein resides in the chloroplast. The protein localises to the plastoglobule. The chain is Probable plastid-lipid-associated protein 13, chloroplastic (PAP13) from Arabidopsis thaliana (Mouse-ear cress).